A 482-amino-acid polypeptide reads, in one-letter code: MTTNTSTSSTTDDLTTGAPNGTGAPDGANGVGGPTGTVGGPGEHPAYEAGFTESANGRVYTVTGSDWEQILGVGEEENERIVVNMGPQHPSTHGVLRLVLEIEGETVTETRLVIGYLHTGIEKSCEYRTWTQAVTFLTRADYLSPLFNEAAYCLSVERLLGITEQVPERATVIRVMVMELQRIASHLVWLATGGMELGATTAMIFGFREREKVLDLLELITGLRMNHAYIRPGGLAQDLPDGAERAIRAFLADMPKRIREYHALLTGQPVWKARMVDVNVLDAAGCIALGTTGPVLRAAGLPWDLRKTMPYCGYETYEFDVPTALEGDSFARYLVRLEEMGESLKIVDQCLDRLRPGPVMVADKKIAWPSQLSVGSDGTGNSLAYIRKIMGTSMEALIHHFKLVTEGFRVPAGQVYTQIESPRGELGYHVVSDGGTRPFRVHVRDPSFVNLQAVPALTEGGQVADVIVGVASVDPVLGGVDR.

A compositionally biased stretch (low complexity) spans 1–16 (MTTNTSTSSTTDDLTT). A disordered region spans residues 1 to 48 (MTTNTSTSSTTDDLTTGAPNGTGAPDGANGVGGPTGTVGGPGEHPAYE). Residues 29 to 42 (NGVGGPTGTVGGPG) show a composition bias toward gly residues.

This sequence belongs to the complex I 49 kDa subunit family. As to quaternary structure, NDH-1 is composed of 14 different subunits. Subunits NuoB, C, D, E, F, and G constitute the peripheral sector of the complex.

Its subcellular location is the cell membrane. The catalysed reaction is a quinone + NADH + 5 H(+)(in) = a quinol + NAD(+) + 4 H(+)(out). In terms of biological role, NDH-1 shuttles electrons from NADH, via FMN and iron-sulfur (Fe-S) centers, to quinones in the respiratory chain. The immediate electron acceptor for the enzyme in this species is believed to be a menaquinone. Couples the redox reaction to proton translocation (for every two electrons transferred, four hydrogen ions are translocated across the cytoplasmic membrane), and thus conserves the redox energy in a proton gradient. This chain is NADH-quinone oxidoreductase subunit D, found in Frankia casuarinae (strain DSM 45818 / CECT 9043 / HFP020203 / CcI3).